Reading from the N-terminus, the 148-residue chain is Secretory phospholipase A2 (148 aa).

An N-terminal signal peptide occupies residues 1 to 23; the sequence is MKLSVLLALGASSLAAAAPAATA. Asn-61 carries an N-linked (GlcNAc...) asparagine glycan. A disulfide bond links Cys-62 and Cys-78. His-81 is an active-site residue. Asp-82 is a binding site for Ca(2+).

Belongs to the phospholipase A2 family. The cofactor is Ca(2+).

It localises to the secreted. The enzyme catalyses a 1,2-diacyl-sn-glycero-3-phosphocholine + H2O = a 1-acyl-sn-glycero-3-phosphocholine + a fatty acid + H(+). Secretory phospholipase that catalyzes the calcium-dependent hydrolysis of the 2-acyl groups in 3-sn-phosphoglycerides. Increases the ability to utilize host-derived nutrients and lipids, and promotes lipid dropplets accumulation. Plays a role in virulence. In Arthroderma benhamiae (strain ATCC MYA-4681 / CBS 112371) (Trichophyton mentagrophytes), this protein is Secretory phospholipase A2.